Consider the following 445-residue polypeptide: C-terminal-binding protein 2 (445 aa).

At Arg-22 the chain carries Asymmetric dimethylarginine. NAD(+)-binding positions include Ser-106, 186-191, Asp-210, 243-249, 270-272, and Asp-296; these read IGFGRT, CNLNEHN, and AAR. The active site involves Arg-272. Glu-301 is an active-site residue. His-321 (proton donor) is an active-site residue. 321–324 is an NAD(+) binding site; sequence HTAW. The segment at 414–445 is disordered; the sequence is THNLPTVAHPSQAPSPNQPTKHGDNREHPNEQ. Ser-428 bears the Phosphoserine; by HIPK2 mark. Over residues 434-445 the composition is skewed to basic and acidic residues; the sequence is KHGDNREHPNEQ.

Belongs to the D-isomer specific 2-hydroxyacid dehydrogenase family. As to quaternary structure, interacts with HIPK2 and PNN. Interacts with the transcription factors ZNF217, BKLF, delta EF1/AREB6/ZEB, EVI-1 and Friend of GATA (FOG) via the consensus motif P-X-[DNS]-L-[STVA]. Also interacts with the C-terminus of adenovirus E1A protein. Can form a complex with BKLF on a CACCC-box oligonucleotide. Can form homodimers or heterodimers of CTBP1 and CTBP2. Interacts with NRIP1 and WIZ. Interacts with PRDM16; represses white adipose tissue (WAT)-specific genes expression. Interacts with MCRIP1. In terms of processing, phosphorylation by HIPK2 on Ser-428 induces proteasomal degradation. Found in all tissues except spleen and liver.

Its subcellular location is the nucleus. It is found in the synapse. Corepressor targeting diverse transcription regulators. Isoform 2 probably acts as a scaffold for specialized synapses. Functions in brown adipose tissue (BAT) differentiation. This Mus musculus (Mouse) protein is C-terminal-binding protein 2 (Ctbp2).